A 116-amino-acid polypeptide reads, in one-letter code: Ribosome-binding factor A (116 aa).

Belongs to the RbfA family. Monomer. Binds 30S ribosomal subunits, but not 50S ribosomal subunits or 70S ribosomes.

It is found in the cytoplasm. One of several proteins that assist in the late maturation steps of the functional core of the 30S ribosomal subunit. Associates with free 30S ribosomal subunits (but not with 30S subunits that are part of 70S ribosomes or polysomes). Required for efficient processing of 16S rRNA. May interact with the 5'-terminal helix region of 16S rRNA. The protein is Ribosome-binding factor A of Chlorobium phaeobacteroides (strain BS1).